A 179-amino-acid chain; its full sequence is Inner membrane-spanning protein YciB (179 aa).

5 helical membrane passes run Ile-22–Val-42, Met-50–Asn-70, Trp-76–Met-96, Leu-121–Leu-141, and Phe-149–Ile-169.

This sequence belongs to the YciB family.

It localises to the cell inner membrane. Plays a role in cell envelope biogenesis, maintenance of cell envelope integrity and membrane homeostasis. In Salmonella dublin (strain CT_02021853), this protein is Inner membrane-spanning protein YciB.